A 647-amino-acid polypeptide reads, in one-letter code: Zinc transporter ZIP4 (647 aa).

A signal peptide spans 1 to 22 (MASLVSLELGLLLAVLVVTATA). The Extracellular segment spans residues 23 to 327 (SPPAGLLSLL…QDQLSQSERY (305 aa)). 3 disulfide bridges follow: Cys-57-Cys-62, Cys-65-Cys-111, and Cys-160-Cys-195. Positions 236 to 255 (EAHSDHSHRHRGASSRDPVP) are disordered. Asn-261 carries N-linked (GlcNAc...) asparagine glycosylation. An intrachain disulfide couples Cys-270 to Cys-309. The chain crosses the membrane as a helical span at residues 328-348 (LYGSLATLLICLCAVFGLLLL). Residues 349–359 (TCTGCRGVTHY) are Cytoplasmic-facing. Residues 360–380 (ILQTFLSLAVGAVTGDAVLHL) form a helical membrane-spanning segment. At 381–402 (TPKVLGLHTHSEEGLSPQPTWR) the chain is on the extracellular side. The chain crosses the membrane as a helical span at residues 403-423 (LLAMLAGLYAFFLFENLFNLL). At 424-498 (LPRDPEDLED…LSPELRLLPY (75 aa)) the chain is on the cytoplasmic side. Residues 452–454 (LQL) carry the Essential for SLC39A4 endocytosis motif. Positions 458–484 (ELRQPKPPHEGSRADLVAEESPELLNP) are disordered. Residues 460 to 470 (RQPKPPHEGSR) are compositionally biased toward basic and acidic residues. A helical membrane pass occupies residues 499 to 518 (MITLGDAVHNFADGLAVGAA). Zn(2+)-binding residues include His-507, Asn-508, and Asp-511. At 519-526 (FASSWKTG) the chain is on the extracellular side. Residues 527 to 553 (LATSLAVFCHELPHELGDFAALLHAGL) form a helical membrane-spanning segment. Residues His-536, Glu-537, and His-540 each contribute to the Zn(2+) site. Over 554 to 558 (SVRQA) the chain is Cytoplasmic. A helical membrane pass occupies residues 559–579 (LLLNLASALTAFAGLYVALAV). Over 580–586 (GVSEESE) the chain is Extracellular. A helical membrane pass occupies residues 587–607 (AWILAVATGLFLYVALCDMLP). Residues 608–617 (AMLKVRDPRP) lie on the Cytoplasmic side of the membrane. The chain crosses the membrane as a helical span at residues 618-638 (WLLFLLHNVGLLGGWTVLLLL). Topologically, residues 639–647 (SLYEDDITF) are extracellular.

Belongs to the ZIP transporter (TC 2.A.5) family. Homodimer; homodimerization is mediated by the transmembrane domain. Post-translationally, the extracellular N-terminal ectodomain is cleaved when cells are Zn(2+) deficient, N-terminally cleaved SLC39A4 is internalized at a faster rate. Under excess Zn(2+) conditions, SLC39A4 on the cell surface is rapidly endocytosed, ubiquitinated and degraded. In terms of processing, glycosylated. In terms of tissue distribution, highly expressed in kidney, small intestine, stomach, colon, jejunum and duodenum.

Its subcellular location is the cell membrane. The protein resides in the recycling endosome membrane. It localises to the apical cell membrane. It carries out the reaction Zn(2+)(in) = Zn(2+)(out). With respect to regulation, the Zn(2+) uniporter activity is regulated by zinc availability. Extracellular acidification stimulated SLC39A4-dependent Zn(2+) uptake. Its function is as follows. Selective transporter that mediates the uptake of Zn(2+). Plays an essential role for dietary zinc uptake from small intestine. The Zn(2+) uniporter activity is regulated by zinc availability. Also exhibits polyspecific binding and transport of Cu(2+), Cd(2+) and possibly Ni(2+) but at higher concentrations. In Homo sapiens (Human), this protein is Zinc transporter ZIP4.